The sequence spans 220 residues: Metalloproteinase inhibitor 2 (220 aa).

An N-terminal signal peptide occupies residues 1–26 (MGAAARSLRLALGLLLLATLLRPADA). C27 is a Zn(2+) binding site. Involved in metalloproteinase-binding stretches follow at residues 27–30 (CSCS) and 95–96 (SA). Disulfide bonds link C27–C98, C29–C127, C39–C152, C154–C201, C159–C164, and C172–C193. Residues 27-152 (CSCSPVHPQQ…SLNHRYQMGC (126 aa)) form the NTR domain.

It belongs to the protease inhibitor I35 (TIMP) family. Interacts (via the C-terminal) with MMP2 (via the C-terminal PEX domain); the interaction inhibits the MMP2 activity. The activity of TIMP2 is dependent on the presence of disulfide bonds.

Its subcellular location is the secreted. Complexes with metalloproteinases (such as collagenases) and irreversibly inactivates them by binding to their catalytic zinc cofactor. This chain is Metalloproteinase inhibitor 2 (Timp2), found in Rattus norvegicus (Rat).